A 215-amino-acid chain; its full sequence is Cytochrome b6 (215 aa).

The helical transmembrane segment at 32–52 (IFHCLGGITLTCFLVQVATGF) threads the bilayer. Cys-35 contributes to the heme c binding site. 2 residues coordinate heme b: His-86 and His-100. The next 3 membrane-spanning stretches (helical) occupy residues 90-110 (ASMM…TGGF), 116-136 (LTWV…VTGY), and 186-206 (LHTF…FPMI). Heme b contacts are provided by His-187 and His-202.

It belongs to the cytochrome b family. PetB subfamily. As to quaternary structure, the 4 large subunits of the cytochrome b6-f complex are cytochrome b6, subunit IV (17 kDa polypeptide, PetD), cytochrome f and the Rieske protein, while the 4 small subunits are PetG, PetL, PetM and PetN. The complex functions as a dimer. Heme b serves as cofactor. Heme c is required as a cofactor.

The protein resides in the plastid. It is found in the chloroplast thylakoid membrane. In terms of biological role, component of the cytochrome b6-f complex, which mediates electron transfer between photosystem II (PSII) and photosystem I (PSI), cyclic electron flow around PSI, and state transitions. In Amborella trichopoda, this protein is Cytochrome b6.